Reading from the N-terminus, the 765-residue chain is Phosphoribosylformylglycinamidine synthase subunit PurL (765 aa).

H57 is a catalytic residue. Positions 60 and 104 each coordinate ATP. Residue E106 coordinates Mg(2+). Substrate contacts are provided by residues 107–110 (SHNH) and R129. H108 functions as the Proton acceptor in the catalytic mechanism. Residue D130 participates in Mg(2+) binding. A substrate-binding site is contributed by Q254. D282 contributes to the Mg(2+) binding site. Residue 326 to 328 (ESQ) participates in substrate binding. The ATP site is built by N508 and G545. N546 contacts Mg(2+). Position 548 (S548) interacts with substrate.

The protein belongs to the FGAMS family. As to quaternary structure, monomer. Part of the FGAM synthase complex composed of 1 PurL, 1 PurQ and 2 PurS subunits.

It localises to the cytoplasm. The enzyme catalyses N(2)-formyl-N(1)-(5-phospho-beta-D-ribosyl)glycinamide + L-glutamine + ATP + H2O = 2-formamido-N(1)-(5-O-phospho-beta-D-ribosyl)acetamidine + L-glutamate + ADP + phosphate + H(+). Its pathway is purine metabolism; IMP biosynthesis via de novo pathway; 5-amino-1-(5-phospho-D-ribosyl)imidazole from N(2)-formyl-N(1)-(5-phospho-D-ribosyl)glycinamide: step 1/2. In terms of biological role, part of the phosphoribosylformylglycinamidine synthase complex involved in the purines biosynthetic pathway. Catalyzes the ATP-dependent conversion of formylglycinamide ribonucleotide (FGAR) and glutamine to yield formylglycinamidine ribonucleotide (FGAM) and glutamate. The FGAM synthase complex is composed of three subunits. PurQ produces an ammonia molecule by converting glutamine to glutamate. PurL transfers the ammonia molecule to FGAR to form FGAM in an ATP-dependent manner. PurS interacts with PurQ and PurL and is thought to assist in the transfer of the ammonia molecule from PurQ to PurL. The sequence is that of Phosphoribosylformylglycinamidine synthase subunit PurL from Corynebacterium aurimucosum (strain ATCC 700975 / DSM 44827 / CIP 107346 / CN-1) (Corynebacterium nigricans).